The chain runs to 417 residues: 3-ketoacyl-CoA thiolase, peroxisomal (417 aa).

A peroxisome-targeting transit peptide spans 1–15; that stretch reads MSQRLQSIKDHLVES. A PTS2-type peroxisomal targeting signal region spans residues 1 to 15; sequence MSQRLQSIKDHLVES. The Acyl-thioester intermediate role is filled by C125. Active-site proton acceptor residues include H375 and C403.

It belongs to the thiolase-like superfamily. Thiolase family. In terms of assembly, homodimer. Interacts (via PTS2-type peroxisomal targeting signal region) with PEX7; leading to its translocation into peroxisomes.

It localises to the peroxisome. Its subcellular location is the mitochondrion intermembrane space. The catalysed reaction is an acyl-CoA + acetyl-CoA = a 3-oxoacyl-CoA + CoA. It functions in the pathway lipid metabolism; fatty acid metabolism. Responsible for the thiolytic cleavage of straight chain 3-keto fatty acyl-CoAs (3-oxoacyl-CoAs). The protein is 3-ketoacyl-CoA thiolase, peroxisomal (POT1) of Saccharomyces cerevisiae (strain ATCC 204508 / S288c) (Baker's yeast).